The chain runs to 625 residues: DELLA protein SLR1 (625 aa).

Positions 1 to 34 (MKREYQEAGGSSGGGSSADMGSCKDKVMAGAAGE) are disordered. The short motif at 39-43 (DELLA) is the DELLA motif element. Residues 167–209 (TADPSAADSARDTKRMRTGGGSTSSSSSSSSSLGGGASRGSVV) are disordered. Low complexity predominate over residues 189–198 (TSSSSSSSSS). A GRAS domain is found at 232–621 (VDTQEAGIRL…RPLIATSAWR (390 aa)). Residues 239–294 (IRLVHALLACAEAVQQENFAAAEALVKQIPTLAASQGGAMRKVAAYFGEALARRVY) are leucine repeat I (LRI). The segment at 241-278 (LVHALLACAEAVQQENFAAAEALVKQIPTLAASQGGAM) is required for possible homodimerization. The LxCxE motif motif lies at 246-250 (LACAE). The VHIID stretch occupies residues 313–378 (HAHFYESCPY…GGPPSFRLTG (66 aa)). The VHIID motif lies at 344 to 348 (VHVVD). Residues 392–431 (QVGWKLAQFAHTIRVDFQYRGLVAATLADLEPFMLQPEGE) form a leucine repeat II (LRII) region. The tract at residues 441 to 542 (IAVNSVFELH…EVYLGRQICN (102 aa)) is PFYRE. The LXXLL motif signature appears at 449–453 (LHRLL). The tract at residues 545–621 (ACEGAERTER…RPLIATSAWR (77 aa)) is SAW.

The protein belongs to the GRAS family. DELLA subfamily. In terms of assembly, may be a homodimer. Interacts directly with the GID2 component of the SCF(GID2) complex. Interacts with GID1 in a GA-dependent manner, probably leading to its interaction with GID2 and its subsequent degradation. Interacts with D14 and GID1 in an strigolactone-dependent manner. Interacts with HD16/EL1. In terms of processing, phosphorylated on Ser/Thr residues in the N-terminal part. Both phosphorylated and unphosphorylated forms are degraded upon GA treatment, suggesting that phosphorylation does not trigger ubiquitination. Phosphorylated by HD16/EL1. Phosphorylation enhances its stability. Post-translationally, ubiquitinated. Upon GA application it is ubiquitinated by the SCF(GID2) complex, leading to its subsequent degradation. Expressed in nodes, internodes, leaf sheats of young seedlings and ears of adult plants. Weakly expressed in leaf blade and root.

The protein resides in the nucleus. Probable transcriptional regulator that acts as a repressor of the gibberellin (GA) signaling pathway. Probably acts by participating in large multiprotein complexes that repress transcription of GA-inducible genes. Upon GA application, it is degraded by the proteasome, allowing the GA signaling pathway. In contrast, its overexpression prevents the GA signaling pathway and induces a dwarf phenotype. The chain is DELLA protein SLR1 from Oryza sativa subsp. japonica (Rice).